The sequence spans 544 residues: Membrane protein insertase YidC (544 aa).

The next 5 membrane-spanning stretches (helical) occupy residues 13-33 (LSLF…SNIL), 343-363 (WGLS…PLTF), 409-429 (LGGC…YSLV), 461-481 (LYFV…FTQL), and 506-526 (MPIM…IYWI).

This sequence belongs to the OXA1/ALB3/YidC family. Type 1 subfamily. Interacts with the Sec translocase complex via SecD. Specifically interacts with transmembrane segments of nascent integral membrane proteins during membrane integration.

It is found in the cell inner membrane. Functionally, required for the insertion and/or proper folding and/or complex formation of integral membrane proteins into the membrane. Involved in integration of membrane proteins that insert both dependently and independently of the Sec translocase complex, as well as at least some lipoproteins. Aids folding of multispanning membrane proteins. In Borreliella burgdorferi (strain ATCC 35210 / DSM 4680 / CIP 102532 / B31) (Borrelia burgdorferi), this protein is Membrane protein insertase YidC.